The chain runs to 72 residues: DNA-directed RNA polymerase subunit omega (72 aa).

Belongs to the RNA polymerase subunit omega family. As to quaternary structure, the RNAP catalytic core consists of 2 alpha, 1 beta, 1 beta' and 1 omega subunit. When a sigma factor is associated with the core the holoenzyme is formed, which can initiate transcription.

The enzyme catalyses RNA(n) + a ribonucleoside 5'-triphosphate = RNA(n+1) + diphosphate. Promotes RNA polymerase assembly. Latches the N- and C-terminal regions of the beta' subunit thereby facilitating its interaction with the beta and alpha subunits. The protein is DNA-directed RNA polymerase subunit omega of Lactobacillus johnsonii (strain CNCM I-12250 / La1 / NCC 533).